The primary structure comprises 616 residues: MALLQISEPGLSAAPHQRRLAAGIDLGTTNSLVATVRSGQAETLADHEGRHLLPSVVHYQQQGHSVGYDARTNAALDTANTISSVKRLMGRSLADIQQRYPHLPYQFQASENGLPMIETAAGLLNPVRVSADILKALAARATEALAGELDGVVITVPAYFDDAQRQGTKDAARLAGLHVLRLLNEPTAAAIAYGLDSGQEGVIAVYDLGGGTFDISILRLSRGVFEVLATGGDSALGGDDFDHLLADYIREQADIPDRSDNRVQRELLDAAIAAKIALSDADSVTVNVAGWQGEISREQFNELIAPLVKRTLLACRRALKDAGVEADEVLEVVMVGGSTRVPLVRERVGEFFGRPPLTSIDPDKVVAIGAAIQADILVGNKPDSEMLLLDVIPLSLGLETMGGLVEKVIPRNTTIPVARAQDFTTFKDGQTAMSIHVMQGERELVQDCRSLARFALRGIPALPAGGAHIRVTFQVDADGLLSVTAMEKSTGVEASIQVKPSYGLTDSEIASMIKDSMSYAEQDVKARMLAEQKVEAARVLESLHGALAADAALLSAAERQVIDNAAAHLSEVAQGDDVDAIEQAIKNVDKQTQDFAARRMDQSVRRALKGHSVDEV.

It belongs to the heat shock protein 70 family.

Chaperone involved in the maturation of iron-sulfur cluster-containing proteins. Has a low intrinsic ATPase activity which is markedly stimulated by HscB. Involved in the maturation of IscU. This is Chaperone protein HscA from Shigella boydii serotype 18 (strain CDC 3083-94 / BS512).